Here is a 590-residue protein sequence, read N- to C-terminus: Potassium-transporting ATPase potassium-binding subunit (590 aa).

4 helical membrane-spanning segments follow: residues 3-23, 63-83, 134-154, and 177-197; these read AFLL…RPLG, HYAL…YALQ, GLAV…IALI, and LYVL…QGAI. Residues 217–244 form a disordered region; sequence PKTDAQGNPIKDAQGNPVTEKATTQKQT. Helical transmembrane passes span 284–304, 312–332, 359–379, 388–408, 411–431, 450–470, 515–535, and 558–578; these read FVQM…FGAM, WAVL…EMWA, FGVV…CGAV, ALGG…FGGV, GLYG…LMIG, SIAI…AVLA, VALG…VLAM, and LFVV…YIPA.

The protein belongs to the KdpA family. As to quaternary structure, the system is composed of three essential subunits: KdpA, KdpB and KdpC.

It is found in the cell inner membrane. In terms of biological role, part of the high-affinity ATP-driven potassium transport (or Kdp) system, which catalyzes the hydrolysis of ATP coupled with the electrogenic transport of potassium into the cytoplasm. This subunit binds the periplasmic potassium ions and delivers the ions to the membrane domain of KdpB through an intramembrane tunnel. This chain is Potassium-transporting ATPase potassium-binding subunit, found in Ralstonia nicotianae (strain ATCC BAA-1114 / GMI1000) (Ralstonia solanacearum).